Consider the following 152-residue polypeptide: SsrA-binding protein (152 aa).

It belongs to the SmpB family.

The protein resides in the cytoplasm. Functionally, required for rescue of stalled ribosomes mediated by trans-translation. Binds to transfer-messenger RNA (tmRNA), required for stable association of tmRNA with ribosomes. tmRNA and SmpB together mimic tRNA shape, replacing the anticodon stem-loop with SmpB. tmRNA is encoded by the ssrA gene; the 2 termini fold to resemble tRNA(Ala) and it encodes a 'tag peptide', a short internal open reading frame. During trans-translation Ala-aminoacylated tmRNA acts like a tRNA, entering the A-site of stalled ribosomes, displacing the stalled mRNA. The ribosome then switches to translate the ORF on the tmRNA; the nascent peptide is terminated with the 'tag peptide' encoded by the tmRNA and targeted for degradation. The ribosome is freed to recommence translation, which seems to be the essential function of trans-translation. The protein is SsrA-binding protein of Rickettsia africae (strain ESF-5).